We begin with the raw amino-acid sequence, 251 residues long: Urease accessory protein UreF (251 aa).

Positions Met-1–Ala-20 are disordered. A compositionally biased stretch (low complexity) spans Pro-9–Ala-20.

The protein belongs to the UreF family. UreD, UreF and UreG form a complex that acts as a GTP-hydrolysis-dependent molecular chaperone, activating the urease apoprotein by helping to assemble the nickel containing metallocenter of UreC. The UreE protein probably delivers the nickel.

The protein resides in the cytoplasm. Functionally, required for maturation of urease via the functional incorporation of the urease nickel metallocenter. The protein is Urease accessory protein UreF of Paracidovorax citrulli (strain AAC00-1) (Acidovorax citrulli).